The sequence spans 260 residues: MKPIVKWSGGKTDELKRFEDYIPSDCSTFIEPFAGGAATFFHVGNQFENKVLSDVHVELVALYRAIANGKSQAIYDFMKSHANDEKTYYEVRSWKPEDYVDVASRFYYLRKTCFRGMMRYNKNGGFNVPFGRYKTYNFEDIINEEYYNILKDTIILEKSFDYIFETYNDSSNFVFLDPPYDSVFTDYGYCSFGKEEHVRLSNFFKTTKNKCLMVIGATDFIRELYDGYIHTEYEKKYRFKLHSGRVGDEINTTHLVIKNY.

S-adenosyl-L-methionine is bound by residues Trp7, Lys11, Asp54, and Asp177.

The protein belongs to the N(4)/N(6)-methyltransferase family.

It carries out the reaction a 2'-deoxyadenosine in DNA + S-adenosyl-L-methionine = an N(6)-methyl-2'-deoxyadenosine in DNA + S-adenosyl-L-homocysteine + H(+). Its function is as follows. An alpha subtype methylase, recognizes the double-stranded sequence 5'-GANTC-3', methylates A-2 on both strands, and protects the DNA from cleavage by the CviBI endonuclease. In Paramecium bursaria Chlorella virus NC1A (PBCV-NC1A), this protein is Type II methyltransferase M.CviBI.